We begin with the raw amino-acid sequence, 190 residues long: MKNNQPADAISFIVDVLKKEQVIAYPTEAVFGVGCDPDSETAVKRLLELKQRPMEKGLILIAANFDQLKPYIDDAALTAEQREAVFARWPGPVTFVFPAKPSTPRWLTGRFDSLAVRVTNHPQVIALCEAFGKPLVSTSANLSGLEPCRTAQEVLAQFGDDFPVLHGATGGRQNPSEIRDALTGELFRQG.

The region spanning 7 to 190 (ADAISFIVDV…ALTGELFRQG (184 aa)) is the YrdC-like domain.

Belongs to the SUA5 family. TsaC subfamily.

It is found in the cytoplasm. The enzyme catalyses L-threonine + hydrogencarbonate + ATP = L-threonylcarbamoyladenylate + diphosphate + H2O. Functionally, required for the formation of a threonylcarbamoyl group on adenosine at position 37 (t(6)A37) in tRNAs that read codons beginning with adenine. Catalyzes the conversion of L-threonine, HCO(3)(-)/CO(2) and ATP to give threonylcarbamoyl-AMP (TC-AMP) as the acyladenylate intermediate, with the release of diphosphate. This is Threonylcarbamoyl-AMP synthase from Cronobacter sakazakii (strain ATCC BAA-894) (Enterobacter sakazakii).